The primary structure comprises 85 residues: HPr-like protein Crh (85 aa).

In terms of domain architecture, HPr spans 1–85 (MVQQKVEVRL…KLAAYVQEEV (85 aa)). Position 46 is a phosphoserine; by HPrK/P (serine 46).

Belongs to the HPr family. In terms of assembly, mixture of monomers and homodimers. Interacts with CcpA as a monomer.

Functionally, along with seryl-phosphorylated HPr, phosphorylated Crh is implicated in carbon catabolite repression (CCR) of levanase, inositol dehydrogenase, and beta-xylosidase. Exerts its effect on CCR by interacting with CcpA. The sequence is that of HPr-like protein Crh (crh) from Bacillus subtilis (strain 168).